Here is a 366-residue protein sequence, read N- to C-terminus: Flagellar P-ring protein (366 aa).

Positions 1 to 20 (MVIKFLSALILLLVTTAAQA) are cleaved as a signal peptide.

It belongs to the FlgI family. In terms of assembly, the basal body constitutes a major portion of the flagellar organelle and consists of four rings (L,P,S, and M) mounted on a central rod.

It localises to the periplasm. The protein resides in the bacterial flagellum basal body. Functionally, assembles around the rod to form the L-ring and probably protects the motor/basal body from shearing forces during rotation. The sequence is that of Flagellar P-ring protein from Escherichia coli (strain UTI89 / UPEC).